The sequence spans 461 residues: PTS system sucrose-specific EIIBC component (461 aa).

A PTS EIIB type-1 domain is found at 4–87 (KETAKRLIEL…SKEADIEREE (84 aa)). The Phosphocysteine intermediate; for EIIB activity role is filled by C26. Residues 107-461 (KTLSNIFVPI…KINEDEERKK (355 aa)) form the PTS EIIC type-1 domain. The next 10 helical transmembrane spans lie at 112 to 132 (IFVP…LLGM), 148 to 168 (LLDM…GVSA), 178 to 198 (LGAV…WGLA), 208 to 228 (FGFD…LLAV), 248 to 268 (LLVT…IAIG), 289 to 309 (AGFV…LTGV), 329 to 349 (LLPI…AVFF), 359 to 379 (IALP…IFGV), 387 to 407 (FIAA…THVA), and 430 to 450 (LIHY…AAFV).

The protein localises to the cell membrane. The enzyme catalyses N(pros)-phospho-L-histidyl-[protein](out) + sucrose = sucrose 6(G)-phosphate(in) + L-histidyl-[protein]. Functionally, the phosphoenolpyruvate-dependent sugar phosphotransferase system (sugar PTS), a major carbohydrate active transport system, catalyzes the phosphorylation of incoming sugar substrates concomitantly with their translocation across the cell membrane. This system is involved in sucrose transport. In Bacillus subtilis (strain 168), this protein is PTS system sucrose-specific EIIBC component (sacP).